Reading from the N-terminus, the 122-residue chain is Small ribosomal subunit protein uS13c (122 aa).

The protein belongs to the universal ribosomal protein uS13 family. As to quaternary structure, part of the 30S ribosomal subunit.

Its subcellular location is the plastid. It is found in the chloroplast. Located at the top of the head of the 30S subunit, it contacts several helices of the 16S rRNA. The protein is Small ribosomal subunit protein uS13c of Cyanidium caldarium (Red alga).